Consider the following 75-residue polypeptide: Dermaseptin-S11 (75 aa).

The N-terminal stretch at Met-1 to Cys-22 is a signal peptide. A propeptide spanning residues Glu-23 to Arg-45 is cleaved from the precursor. The disordered stretch occupies residues Glu-25–Lys-44. Residues Glu-30–Ser-41 are compositionally biased toward acidic residues.

The protein belongs to the frog skin active peptide (FSAP) family. Dermaseptin subfamily. Expressed by the skin glands.

The protein localises to the secreted. Its subcellular location is the target cell membrane. Its function is as follows. Antimicrobial peptide with activity against Gram-positive and Gram-negative bacteria, and fungi. Has hemolytic activity. This is Dermaseptin-S11 from Phyllomedusa sauvagei (Sauvage's leaf frog).